The sequence spans 315 residues: Methionyl-tRNA formyltransferase (315 aa).

A (6S)-5,6,7,8-tetrahydrofolate-binding site is contributed by 113–116; the sequence is SLLP.

Belongs to the Fmt family.

The catalysed reaction is L-methionyl-tRNA(fMet) + (6R)-10-formyltetrahydrofolate = N-formyl-L-methionyl-tRNA(fMet) + (6S)-5,6,7,8-tetrahydrofolate + H(+). Functionally, attaches a formyl group to the free amino group of methionyl-tRNA(fMet). The formyl group appears to play a dual role in the initiator identity of N-formylmethionyl-tRNA by promoting its recognition by IF2 and preventing the misappropriation of this tRNA by the elongation apparatus. The protein is Methionyl-tRNA formyltransferase of Klebsiella pneumoniae subsp. pneumoniae (strain ATCC 700721 / MGH 78578).